We begin with the raw amino-acid sequence, 1368 residues long: DNA-directed RNA polymerase subunit beta (1368 aa).

This sequence belongs to the RNA polymerase beta chain family. The RNAP catalytic core consists of 2 alpha, 1 beta, 1 beta' and 1 omega subunit. When a sigma factor is associated with the core the holoenzyme is formed, which can initiate transcription.

It catalyses the reaction RNA(n) + a ribonucleoside 5'-triphosphate = RNA(n+1) + diphosphate. DNA-dependent RNA polymerase catalyzes the transcription of DNA into RNA using the four ribonucleoside triphosphates as substrates. The polypeptide is DNA-directed RNA polymerase subunit beta (Desulfosudis oleivorans (strain DSM 6200 / JCM 39069 / Hxd3) (Desulfococcus oleovorans)).